The sequence spans 244 residues: MSTSKRKRGDDSNWSKRVTKKKPSSAGLKRAGSKADRPSLQIQTLQHAGTTMITVPSGGVCDLINTYARGSDEGNRHTSETLTYKIAIDYHFVADAAACRYSNTGTGVMWLVYDTTPGGQAPTPQTIFAYPDTLKAWPATWKVSRELCHRFVVKRRWLFNMETDGRIGSDIPPSNASWKPCKRNIYFHKFTSGLGVRTQWKNVTDGGVGAIQRGALYMVIAPGNGLTFTAHGQTRLYFKSVGNQ.

Residues 1–24 (MSTSKRKRGDDSNWSKRVTKKKPS) carry the Bipartite nuclear localization signal motif. Positions 1 to 39 (MSTSKRKRGDDSNWSKRVTKKKPSSAGLKRAGSKADRPS) are disordered.

This sequence belongs to the geminiviridae capsid protein family. In terms of assembly, homomultimer. Interacts with the movement protein. Binds to single-stranded and double-stranded viral DNA.

The protein resides in the virion. Its subcellular location is the host nucleus. In terms of biological role, encapsidates the viral genome into characteristic twinned ('geminate') particles. Binds the genomic viral ssDNA and shuttles it into and out of the cell nucleus. Plays a role in protection of the genome from degradation, virus acquisition and transmission by insect vectors, infectivity, and systemic movement. The CP of monopartite geminiviruses is absolutely essential for virus movement. The chain is Capsid protein from Avena sativa (Oat).